Here is a 117-residue protein sequence, read N- to C-terminus: Large ribosomal subunit protein uL18 (117 aa).

Belongs to the universal ribosomal protein uL18 family. In terms of assembly, part of the 50S ribosomal subunit; part of the 5S rRNA/L5/L18/L25 subcomplex. Contacts the 5S and 23S rRNAs.

In terms of biological role, this is one of the proteins that bind and probably mediate the attachment of the 5S RNA into the large ribosomal subunit, where it forms part of the central protuberance. The polypeptide is Large ribosomal subunit protein uL18 (Polynucleobacter asymbioticus (strain DSM 18221 / CIP 109841 / QLW-P1DMWA-1) (Polynucleobacter necessarius subsp. asymbioticus)).